Consider the following 362-residue polypeptide: Histidinol-phosphate aminotransferase (362 aa).

At Lys220 the chain carries N6-(pyridoxal phosphate)lysine.

It belongs to the class-II pyridoxal-phosphate-dependent aminotransferase family. Histidinol-phosphate aminotransferase subfamily. Homodimer. The cofactor is pyridoxal 5'-phosphate.

It carries out the reaction L-histidinol phosphate + 2-oxoglutarate = 3-(imidazol-4-yl)-2-oxopropyl phosphate + L-glutamate. Its pathway is amino-acid biosynthesis; L-histidine biosynthesis; L-histidine from 5-phospho-alpha-D-ribose 1-diphosphate: step 7/9. This is Histidinol-phosphate aminotransferase from Rhodospirillum centenum (strain ATCC 51521 / SW).